Consider the following 193-residue polypeptide: Imidazoleglycerol-phosphate dehydratase (193 aa).

This sequence belongs to the imidazoleglycerol-phosphate dehydratase family.

Its subcellular location is the cytoplasm. It carries out the reaction D-erythro-1-(imidazol-4-yl)glycerol 3-phosphate = 3-(imidazol-4-yl)-2-oxopropyl phosphate + H2O. It participates in amino-acid biosynthesis; L-histidine biosynthesis; L-histidine from 5-phospho-alpha-D-ribose 1-diphosphate: step 6/9. This Saccharolobus islandicus (strain M.14.25 / Kamchatka #1) (Sulfolobus islandicus) protein is Imidazoleglycerol-phosphate dehydratase.